We begin with the raw amino-acid sequence, 263 residues long: MDIRASLSILLLLFGLSQASPLREFEAIFVSEPETVDITTQILETNKGSSEVLFEGDVVLPKNRNALICEDKSCFWKKNANNIVEVPYVVSGEFSINDKSVIANAISIFHAQTCIRFVPRSIQADYLSIENKDGCYSAIGRTGGKQVVSLNRKGCVYSGIAQHELNHALGFYHEQSRSDRDQYVRINWNNISPGMAYNFLKQKTNNQNTPYDYGSLMHYGKTAFAIQPGLETITPIPDENVQIGQRQGLSKIDILRINKLYGC.

The signal sequence occupies residues 1–19 (MDIRASLSILLLLFGLSQA). A propeptide spans 20–64 (SPLREFEAIFVSEPETVDITTQILETNKGSSEVLFEGDVVLPKNR) (activation peptide). In terms of domain architecture, Peptidase M12A spans 65–263 (NALICEDKSC…ILRINKLYGC (199 aa)). 3 disulfide bridges follow: cysteine 69-cysteine 74, cysteine 114-cysteine 263, and cysteine 135-cysteine 155. Histidine 163 lines the Zn(2+) pocket. The active site involves glutamate 164. Zn(2+) is bound by residues histidine 167 and histidine 173.

Zn(2+) is required as a cofactor. In terms of tissue distribution, expressed in cells of the hatching gland.

It is found in the secreted. The enzyme catalyses Hydrolysis of the inner layer of fish egg envelope. Also hydrolysis of casein and small molecule substrates such as succinyl-Leu-Leu-Val-Tyr-|-7-(4-methyl)coumarylamide.. Metalloendopeptidase which participates in the breakdown of the egg envelope at the time of hatching. Cleaves the N-terminal regions of the zona pellucia glycoproteins ZP2 and ZP3, where it specifically recognizes the peptide sequences TVQQS-|-DYLIK (major site) and KLMLK-|-APEPF (minor site). This chain is Hatching enzyme 1.2, found in Danio rerio (Zebrafish).